Reading from the N-terminus, the 460-residue chain is Cysteine--tRNA ligase (460 aa).

Cys-28 is a Zn(2+) binding site. The short motif at 30-40 (MTVYDYCHLGH) is the 'HIGH' region element. The Zn(2+) site is built by Cys-209, His-234, and Glu-238. A 'KMSKS' region motif is present at residues 266–270 (KMSKS). Lys-269 contacts ATP.

Belongs to the class-I aminoacyl-tRNA synthetase family. As to quaternary structure, monomer. Zn(2+) serves as cofactor.

The protein localises to the cytoplasm. The enzyme catalyses tRNA(Cys) + L-cysteine + ATP = L-cysteinyl-tRNA(Cys) + AMP + diphosphate. The sequence is that of Cysteine--tRNA ligase from Pseudomonas putida (strain ATCC 47054 / DSM 6125 / CFBP 8728 / NCIMB 11950 / KT2440).